Here is a 398-residue protein sequence, read N- to C-terminus: Nicotinate phosphoribosyltransferase 2 (398 aa).

At His-224 the chain carries Phosphohistidine; by autocatalysis.

Belongs to the NAPRTase family. In terms of processing, transiently phosphorylated on a His residue during the reaction cycle. Phosphorylation strongly increases the affinity for substrates and increases the rate of nicotinate D-ribonucleotide production. Dephosphorylation regenerates the low-affinity form of the enzyme, leading to product release.

The enzyme catalyses nicotinate + 5-phospho-alpha-D-ribose 1-diphosphate + ATP + H2O = nicotinate beta-D-ribonucleotide + ADP + phosphate + diphosphate. It participates in cofactor biosynthesis; NAD(+) biosynthesis; nicotinate D-ribonucleotide from nicotinate: step 1/1. In terms of biological role, catalyzes the synthesis of beta-nicotinate D-ribonucleotide from nicotinate and 5-phospho-D-ribose 1-phosphate at the expense of ATP. This Pseudomonas aeruginosa (strain ATCC 15692 / DSM 22644 / CIP 104116 / JCM 14847 / LMG 12228 / 1C / PRS 101 / PAO1) protein is Nicotinate phosphoribosyltransferase 2.